The following is a 552-amino-acid chain: Polypyrimidine tract-binding protein 3 (552 aa).

Met-1 carries the N-acetylmethionine modification. Ser-17 bears the Phosphoserine mark. Over residues 32-43 the composition is skewed to polar residues; that stretch reads MNSSTPSTANGN. Residues 32-55 form a disordered region; sequence MNSSTPSTANGNDSKKFKRDRPPC. 3 RRM domains span residues 59-143, 182-258, and 358-432; these read RVLH…NLPN, LRII…FSKL, and SVLL…LSKH. Lys-65 is covalently cross-linked (Glycyl lysine isopeptide (Lys-Gly) (interchain with G-Cter in SUMO2)). Tyr-127 carries the phosphotyrosine modification. Phosphothreonine is present on Thr-138. A Glycyl lysine isopeptide (Lys-Gly) (interchain with G-Cter in SUMO2) cross-link involves residue Lys-216. Lys-423 is subject to N6-acetyllysine. The disordered stretch occupies residues 435–455; it reads VQLPREGQEDQGLTKDFSNSP. Phosphoserine is present on Ser-454. Positions 475-550 constitute an RRM 4 domain; it reads ATLHLSNIPP…HHLRVSFSKS (76 aa).

In terms of assembly, interacts with THBS4 (via the acidic amphipathic C-terminus). As to expression, expressed in several hematopoietic cell lines examined.

Its function is as follows. RNA-binding protein that mediates pre-mRNA alternative splicing regulation. Plays a role in the regulation of cell proliferation, differentiation and migration. Positive regulator of EPO-dependent erythropoiesis. Participates in cell differentiation regulation by repressing tissue-specific exons. Promotes FAS exon 6 skipping. Binds RNA, preferentially to both poly(G) and poly(U). This is Polypyrimidine tract-binding protein 3 (PTBP3) from Homo sapiens (Human).